The chain runs to 446 residues: MKFPASVIASVFLFVAETAAALYLSSTYRSAGDRMWQVLTLLFSLMPCALVQFTLLFVHRDLSRDRPLALLMHLLQLGPLYRCCEVFCIYCQSDQNEEPYVSITKKRQMPKDGLSEEVEKEVGQAEGKLITHRSAFSRASVIQAFLGSAPQLTLQLYITVLEQNITTGRCFIMTLSLLSIVYGALRCNILAIKIKYDEYEVKVKPLAYVCIFLWRSFEIATRVIVLVLFTSVLKIWVVAVILVNFFSFFLYPWIVFWCSGSPFPENIEKALSRVGTTIVLCFLTLLYAGINMFCWSAVQLKIDNPELISKSQNWYRLLIYYMTRFIENSVLLLLWYFFKTDIYMYVCAPLLILQLLIGYCTGILFMLVFYQFFHPCKKLFSSSVSESFRALLRCACWSSLRRKSSEPVGRIDTDLKACTEQDVMPTTSKVIPEATDIWTAVDLCSA.

Topologically, residues 1–2 (MK) are cytoplasmic. A helical transmembrane segment spans residues 3 to 23 (FPASVIASVFLFVAETAAALY). Topologically, residues 24 to 37 (LSSTYRSAGDRMWQ) are extracellular. Residues 38–58 (VLTLLFSLMPCALVQFTLLFV) traverse the membrane as a helical segment. Over 59-68 (HRDLSRDRPL) the chain is Cytoplasmic. A helical transmembrane segment spans residues 69–89 (ALLMHLLQLGPLYRCCEVFCI). The Extracellular portion of the chain corresponds to 90-140 (YCQSDQNEEPYVSITKKRQMPKDGLSEEVEKEVGQAEGKLITHRSAFSRAS). Ser115 is subject to Phosphoserine. A helical transmembrane segment spans residues 141 to 161 (VIQAFLGSAPQLTLQLYITVL). The Cytoplasmic portion of the chain corresponds to 162 to 171 (EQNITTGRCF). The chain crosses the membrane as a helical span at residues 172-192 (IMTLSLLSIVYGALRCNILAI). Topologically, residues 193–208 (KIKYDEYEVKVKPLAY) are extracellular. The helical transmembrane segment at 209–229 (VCIFLWRSFEIATRVIVLVLF) threads the bilayer. Over 230–235 (TSVLKI) the chain is Cytoplasmic. Residues 236-256 (WVVAVILVNFFSFFLYPWIVF) traverse the membrane as a helical segment. Topologically, residues 257–277 (WCSGSPFPENIEKALSRVGTT) are extracellular. Residues 278–298 (IVLCFLTLLYAGINMFCWSAV) form a helical membrane-spanning segment. Residues 299–317 (QLKIDNPELISKSQNWYRL) are Cytoplasmic-facing. The chain crosses the membrane as a helical span at residues 318–338 (LIYYMTRFIENSVLLLLWYFF). At 339–349 (KTDIYMYVCAP) the chain is on the extracellular side. Residues 350–370 (LLILQLLIGYCTGILFMLVFY) form a helical membrane-spanning segment. The Cytoplasmic portion of the chain corresponds to 371 to 446 (QFFHPCKKLF…IWTAVDLCSA (76 aa)).

Belongs to the XK family. Heterodimer with Kell; disulfide-linked. Interacts with VPS13A.

It localises to the endoplasmic reticulum membrane. Its function is as follows. Recruits the lipid transfer protein VPS13A from lipid droplets to the endoplasmic reticulum (ER) membrane. This is Endoplasmic reticulum membrane adapter protein XK from Mus musculus (Mouse).